The chain runs to 364 residues: UDP-N-acetylglucosamine--N-acetylmuramyl-(pentapeptide) pyrophosphoryl-undecaprenol N-acetylglucosamine transferase (364 aa).

Residues 13 to 15 (TGG), N125, R165, S192, and Q293 each bind UDP-N-acetyl-alpha-D-glucosamine.

It belongs to the glycosyltransferase 28 family. MurG subfamily.

It is found in the cell inner membrane. It carries out the reaction di-trans,octa-cis-undecaprenyl diphospho-N-acetyl-alpha-D-muramoyl-L-alanyl-D-glutamyl-meso-2,6-diaminopimeloyl-D-alanyl-D-alanine + UDP-N-acetyl-alpha-D-glucosamine = di-trans,octa-cis-undecaprenyl diphospho-[N-acetyl-alpha-D-glucosaminyl-(1-&gt;4)]-N-acetyl-alpha-D-muramoyl-L-alanyl-D-glutamyl-meso-2,6-diaminopimeloyl-D-alanyl-D-alanine + UDP + H(+). It participates in cell wall biogenesis; peptidoglycan biosynthesis. Functionally, cell wall formation. Catalyzes the transfer of a GlcNAc subunit on undecaprenyl-pyrophosphoryl-MurNAc-pentapeptide (lipid intermediate I) to form undecaprenyl-pyrophosphoryl-MurNAc-(pentapeptide)GlcNAc (lipid intermediate II). This Cereibacter sphaeroides (strain ATCC 17029 / ATH 2.4.9) (Rhodobacter sphaeroides) protein is UDP-N-acetylglucosamine--N-acetylmuramyl-(pentapeptide) pyrophosphoryl-undecaprenol N-acetylglucosamine transferase.